Reading from the N-terminus, the 372-residue chain is Chaperone protein DnaJ (372 aa).

One can recognise a J domain in the interval 5–70 (SYYDILGVSK…KKRQAYDQFG (66 aa)). The CR-type zinc finger occupies 140-218 (GREYKIEIPR…CGGQGLQEKR (79 aa)). Zn(2+)-binding residues include C153, C156, C170, C173, C192, C195, C206, and C209. CXXCXGXG motif repeat units follow at residues 153–160 (CVDCNGSG), 170–177 (CPDCGGSG), 192–199 (CPTCRGKG), and 206–213 (CRSCGGQG).

The protein belongs to the DnaJ family. Homodimer. The cofactor is Zn(2+).

The protein resides in the cytoplasm. Functionally, participates actively in the response to hyperosmotic and heat shock by preventing the aggregation of stress-denatured proteins and by disaggregating proteins, also in an autonomous, DnaK-independent fashion. Unfolded proteins bind initially to DnaJ; upon interaction with the DnaJ-bound protein, DnaK hydrolyzes its bound ATP, resulting in the formation of a stable complex. GrpE releases ADP from DnaK; ATP binding to DnaK triggers the release of the substrate protein, thus completing the reaction cycle. Several rounds of ATP-dependent interactions between DnaJ, DnaK and GrpE are required for fully efficient folding. Also involved, together with DnaK and GrpE, in the DNA replication of plasmids through activation of initiation proteins. The protein is Chaperone protein DnaJ of Leptospira interrogans serogroup Icterohaemorrhagiae serovar copenhageni (strain Fiocruz L1-130).